The chain runs to 227 residues: MKFAVIVFPGSNCDVDMFHAIKDELGEEVDYVWHDTENLDGYDAILLPGGFSYGDYLRCGAISRFANAMKAVQKAAEQGKPILGVCNGFQILVESGLLPGALMRNENLKFMCRTVQLRVENNETMFTSQYEKDEVINIPIAHGEGNYYCDEETLKQLEENNQIAFRYVENPNGSVSDIAGIVNEKGNVLGMMPHPERAVDELLGGAEGLKVFQSILKQWRETYVVNA.

The 223-residue stretch at phenylalanine 3 to valine 225 folds into the Glutamine amidotransferase type-1 domain. Cysteine 86 serves as the catalytic Nucleophile. Residues histidine 194 and glutamate 196 contribute to the active site.

As to quaternary structure, part of the FGAM synthase complex composed of 1 PurL, 1 PurQ and 2 PurS subunits.

The protein localises to the cytoplasm. It carries out the reaction N(2)-formyl-N(1)-(5-phospho-beta-D-ribosyl)glycinamide + L-glutamine + ATP + H2O = 2-formamido-N(1)-(5-O-phospho-beta-D-ribosyl)acetamidine + L-glutamate + ADP + phosphate + H(+). The enzyme catalyses L-glutamine + H2O = L-glutamate + NH4(+). It participates in purine metabolism; IMP biosynthesis via de novo pathway; 5-amino-1-(5-phospho-D-ribosyl)imidazole from N(2)-formyl-N(1)-(5-phospho-D-ribosyl)glycinamide: step 1/2. Its function is as follows. Part of the phosphoribosylformylglycinamidine synthase complex involved in the purines biosynthetic pathway. Catalyzes the ATP-dependent conversion of formylglycinamide ribonucleotide (FGAR) and glutamine to yield formylglycinamidine ribonucleotide (FGAM) and glutamate. The FGAM synthase complex is composed of three subunits. PurQ produces an ammonia molecule by converting glutamine to glutamate. PurL transfers the ammonia molecule to FGAR to form FGAM in an ATP-dependent manner. PurS interacts with PurQ and PurL and is thought to assist in the transfer of the ammonia molecule from PurQ to PurL. The polypeptide is Phosphoribosylformylglycinamidine synthase subunit PurQ (Bacillus cereus (strain 03BB102)).